A 1255-amino-acid chain; its full sequence is Cilia- and flagella-associated protein 337 B (1255 aa).

In terms of domain architecture, EF-hand spans 87–122; the sequence is KLVRCLTNLFEEIDLNGNGILEWDEFTNYVIEKATV. Ca(2+)-binding residues include Asp100, Asn102, Asn104, and Glu111. WD repeat units lie at residues 228–269, 282–322, 326–365, 368–407, 410–449, 496–536, 538–577, 580–624, 625–664, 669–708, 769–808, and 844–883; these read DLKT…WVLA, EFKN…KELE, AHTE…KKRV, EHTR…LIYK, GHSS…NVQC, VDDY…KIFS, VTQG…MIKA, KHSA…RTLE, LKDV…QNGS, TQYE…FKFQ, QQNL…TILE, and AHYE…LIDQ. 2 disordered regions span residues 941–988 and 1140–1160; these read IKSL…NFNP and QQQV…QQPG. Over residues 953–969 the composition is skewed to low complexity; that stretch reads TQESSTQEQEAAQQPQQ. The segment covering 1148–1160 has biased composition (polar residues); it reads TEPSSNRSHQQPG.

Belongs to the CFAP337 family. In terms of assembly, associates with components of the nexin-dynein regulatory complex (N-DRC) and the CFAP184:CFAP263 complex.

It is found in the cell projection. The protein localises to the cilium. Its function is as follows. Associates with components of the nexin-dynein regulatory complex (N-DRC), a key regulator of ciliary/flagellar motility, and might act as an inner dynein arm (IDA) hub or linkage. The polypeptide is Cilia- and flagella-associated protein 337 B (Tetrahymena thermophila (strain SB210)).